The sequence spans 192 residues: A-type ATP synthase subunit E (192 aa).

It belongs to the V-ATPase E subunit family. In terms of assembly, has multiple subunits with at least A(3), B(3), C, D, E, F, H, I and proteolipid K(x).

The protein localises to the cell membrane. Its function is as follows. Component of the A-type ATP synthase that produces ATP from ADP in the presence of a proton gradient across the membrane. The protein is A-type ATP synthase subunit E of Metallosphaera sedula (strain ATCC 51363 / DSM 5348 / JCM 9185 / NBRC 15509 / TH2).